The chain runs to 270 residues: Putative pyruvate, phosphate dikinase regulatory protein (270 aa).

ADP is bound at residue 149 to 156 (GVSRTSKT).

The protein belongs to the pyruvate, phosphate/water dikinase regulatory protein family. PDRP subfamily.

The catalysed reaction is N(tele)-phospho-L-histidyl/L-threonyl-[pyruvate, phosphate dikinase] + ADP = N(tele)-phospho-L-histidyl/O-phospho-L-threonyl-[pyruvate, phosphate dikinase] + AMP + H(+). The enzyme catalyses N(tele)-phospho-L-histidyl/O-phospho-L-threonyl-[pyruvate, phosphate dikinase] + phosphate + H(+) = N(tele)-phospho-L-histidyl/L-threonyl-[pyruvate, phosphate dikinase] + diphosphate. Bifunctional serine/threonine kinase and phosphorylase involved in the regulation of the pyruvate, phosphate dikinase (PPDK) by catalyzing its phosphorylation/dephosphorylation. This Thermoanaerobacter pseudethanolicus (strain ATCC 33223 / 39E) (Clostridium thermohydrosulfuricum) protein is Putative pyruvate, phosphate dikinase regulatory protein.